The sequence spans 237 residues: Orotidine 5'-phosphate decarboxylase (237 aa).

Residues aspartate 17, lysine 39, aspartate 66 to threonine 75, threonine 121, arginine 182, glutamine 191, glycine 211, and arginine 212 each bind substrate. Catalysis depends on lysine 68, which acts as the Proton donor.

Belongs to the OMP decarboxylase family. Type 1 subfamily. As to quaternary structure, homodimer.

It catalyses the reaction orotidine 5'-phosphate + H(+) = UMP + CO2. It functions in the pathway pyrimidine metabolism; UMP biosynthesis via de novo pathway; UMP from orotate: step 2/2. Its function is as follows. Catalyzes the decarboxylation of orotidine 5'-monophosphate (OMP) to uridine 5'-monophosphate (UMP). The sequence is that of Orotidine 5'-phosphate decarboxylase from Rhodopseudomonas palustris (strain TIE-1).